The chain runs to 314 residues: Putative integrase/recombinase y4rB (314 aa).

The 78-residue stretch at 2 to 79 folds into the Core-binding (CB) domain; it reads STFRQAVQEY…YVRVFARYRA (78 aa). The Tyr recombinase domain occupies 100–304; it reads ARPYLYSKED…SPELMKEAMR (205 aa). Active-site residues include Arg147, Lys172, His248, Arg251, and His282. Residue Tyr291 is the O-(3'-phospho-DNA)-tyrosine intermediate of the active site.

It belongs to the 'phage' integrase family.

The protein is Putative integrase/recombinase y4rB of Sinorhizobium fredii (strain NBRC 101917 / NGR234).